The primary structure comprises 339 residues: N-acetyl-gamma-glutamyl-phosphate reductase (339 aa).

Cys-145 is a catalytic residue.

This sequence belongs to the NAGSA dehydrogenase family. Type 1 subfamily.

It localises to the cytoplasm. It carries out the reaction N-acetyl-L-glutamate 5-semialdehyde + phosphate + NADP(+) = N-acetyl-L-glutamyl 5-phosphate + NADPH + H(+). It functions in the pathway amino-acid biosynthesis; L-arginine biosynthesis; N(2)-acetyl-L-ornithine from L-glutamate: step 3/4. Functionally, catalyzes the NADPH-dependent reduction of N-acetyl-5-glutamyl phosphate to yield N-acetyl-L-glutamate 5-semialdehyde. This chain is N-acetyl-gamma-glutamyl-phosphate reductase, found in Kosmotoga olearia (strain ATCC BAA-1733 / DSM 21960 / TBF 19.5.1).